Here is a 151-residue protein sequence, read N- to C-terminus: Transcriptional repressor NrdR (151 aa).

The segment at 3 to 34 (CPFCSHPDTQVVETREAEDGGFIRRRRQCGGC) is a zinc-finger region. The ATP-cone domain occupies 49–139 (PAIVKKDGRR…VYRSFEDVDD (91 aa)).

This sequence belongs to the NrdR family. Requires Zn(2+) as cofactor.

Functionally, negatively regulates transcription of bacterial ribonucleotide reductase nrd genes and operons by binding to NrdR-boxes. The sequence is that of Transcriptional repressor NrdR from Delftia acidovorans (strain DSM 14801 / SPH-1).